A 77-amino-acid polypeptide reads, in one-letter code: Epoxide hydrolase (77 aa).

As to quaternary structure, monomer.

The catalysed reaction is an epoxide + H2O = an ethanediol. Functionally, this enzyme acts on aliphatic epoxides. Its substrates include epichlorohydrin, epibromohydrin, epoxyoctane and styrene epoxide. The chain is Epoxide hydrolase from Pseudomonas sp. (strain AD1).